Here is a 295-residue protein sequence, read N- to C-terminus: Ribosomal RNA small subunit methyltransferase A (295 aa).

Positions 33, 35, 60, 81, 111, and 129 each coordinate S-adenosyl-L-methionine.

It belongs to the class I-like SAM-binding methyltransferase superfamily. rRNA adenine N(6)-methyltransferase family. RsmA subfamily.

The protein resides in the cytoplasm. It catalyses the reaction adenosine(1518)/adenosine(1519) in 16S rRNA + 4 S-adenosyl-L-methionine = N(6)-dimethyladenosine(1518)/N(6)-dimethyladenosine(1519) in 16S rRNA + 4 S-adenosyl-L-homocysteine + 4 H(+). In terms of biological role, specifically dimethylates two adjacent adenosines (A1518 and A1519) in the loop of a conserved hairpin near the 3'-end of 16S rRNA in the 30S particle. May play a critical role in biogenesis of 30S subunits. The protein is Ribosomal RNA small subunit methyltransferase A of Corynebacterium diphtheriae (strain ATCC 700971 / NCTC 13129 / Biotype gravis).